Consider the following 710-residue polypeptide: Ephexin-1 (710 aa).

Residues Met-1–Ser-20 are compositionally biased toward basic and acidic residues. A disordered region spans residues Met-1 to Asp-146. A regulatory region; modulates activity toward RHOA, RAC1 and CDC42 region spans residues Met-1–Ile-272. Residues Gln-123 to Thr-137 show a composition bias toward polar residues. Tyr-177 bears the Phosphotyrosine mark. The segment at Arg-192–Arg-234 is disordered. The segment covering Asp-211–Leu-227 has biased composition (acidic residues). The 185-residue stretch at Arg-273–Gly-457 folds into the DH domain. The PH domain maps to Trp-489–Arg-601. One can recognise an SH3 domain in the interval Leu-612–Asn-673. Basic and acidic residues predominate over residues His-688 to Lys-699. The interval His-688–Gln-710 is disordered. Basic residues predominate over residues Asp-700 to Gln-710.

As to quaternary structure, interacts with CDK5R1 and EPHA4; activated by EPHA4 through the CDK5 kinase. In terms of processing, src-dependent phosphorylation at Tyr-177 upon EPHA4 activation increases the guanine exchange factor activity toward RHOA. Phosphorylation by CDK5 upon EPHA4 activation by EFNA1 may regulate dendritic spine morphogenesis. As to expression, highly expressed in brain and to a lower extent in eye.

The protein localises to the cytoplasm. Its subcellular location is the membrane. It is found in the cell projection. The protein resides in the growth cone. Acts as a guanine nucleotide exchange factor (GEF) which differentially activates the GTPases RHOA, RAC1 and CDC42. Plays a role in axon guidance regulating ephrin-induced growth cone collapse and dendritic spine morphogenesis. Upon activation by ephrin through EPHA4, the GEF activity switches toward RHOA resulting in its activation. Activated RHOA promotes cone retraction at the expense of RAC1- and CDC42-stimulated growth cone extension. This chain is Ephexin-1 (Ngef), found in Mus musculus (Mouse).